Reading from the N-terminus, the 261-residue chain is Cytochrome c oxidase subunit 3 (261 aa).

Over 1-15 (MTHQTHAYHMVNPSP) the chain is Mitochondrial matrix. A helical membrane pass occupies residues 16 to 34 (WPLTGALSALLMTSGLIMW). Topologically, residues 35–40 (FHFNST) are mitochondrial intermembrane. The helical transmembrane segment at 41–66 (TLLMLGLTTNMLTMYQWWRDVIREST) threads the bilayer. Over 67–72 (FQGHHT) the chain is Mitochondrial matrix. A helical transmembrane segment spans residues 73 to 105 (PNVQKGLRYGMILFIISEVLFFTGFFWAFYHSS). Over 106–128 (LAPTPELGGCWPPTGIHPLNPLE) the chain is Mitochondrial intermembrane. The helical transmembrane segment at 129–152 (VPLLNTSVLLASGVSITWAHHSLM) threads the bilayer. The Mitochondrial matrix portion of the chain corresponds to 153-155 (EGN). A helical membrane pass occupies residues 156–183 (RNHMLQALFITIALGVYFTLLQASEYYE). Residues 184–190 (APFTISD) lie on the Mitochondrial intermembrane side of the membrane. The chain crosses the membrane as a helical span at residues 191 to 223 (GVYGSTFFVATGFHGLHVIIGSTFLIVCFFRQL). Over 224 to 232 (KFHFTSNHH) the chain is Mitochondrial matrix. A helical membrane pass occupies residues 233-256 (FGFEAAAWYWHFVDVVWLFLYVSI). Residues 257–261 (YWWGS) lie on the Mitochondrial intermembrane side of the membrane.

This sequence belongs to the cytochrome c oxidase subunit 3 family. In terms of assembly, component of the cytochrome c oxidase (complex IV, CIV), a multisubunit enzyme composed of 14 subunits. The complex is composed of a catalytic core of 3 subunits MT-CO1, MT-CO2 and MT-CO3, encoded in the mitochondrial DNA, and 11 supernumerary subunits COX4I, COX5A, COX5B, COX6A, COX6B, COX6C, COX7A, COX7B, COX7C, COX8 and NDUFA4, which are encoded in the nuclear genome. The complex exists as a monomer or a dimer and forms supercomplexes (SCs) in the inner mitochondrial membrane with NADH-ubiquinone oxidoreductase (complex I, CI) and ubiquinol-cytochrome c oxidoreductase (cytochrome b-c1 complex, complex III, CIII), resulting in different assemblies (supercomplex SCI(1)III(2)IV(1) and megacomplex MCI(2)III(2)IV(2)).

It localises to the mitochondrion inner membrane. The enzyme catalyses 4 Fe(II)-[cytochrome c] + O2 + 8 H(+)(in) = 4 Fe(III)-[cytochrome c] + 2 H2O + 4 H(+)(out). Component of the cytochrome c oxidase, the last enzyme in the mitochondrial electron transport chain which drives oxidative phosphorylation. The respiratory chain contains 3 multisubunit complexes succinate dehydrogenase (complex II, CII), ubiquinol-cytochrome c oxidoreductase (cytochrome b-c1 complex, complex III, CIII) and cytochrome c oxidase (complex IV, CIV), that cooperate to transfer electrons derived from NADH and succinate to molecular oxygen, creating an electrochemical gradient over the inner membrane that drives transmembrane transport and the ATP synthase. Cytochrome c oxidase is the component of the respiratory chain that catalyzes the reduction of oxygen to water. Electrons originating from reduced cytochrome c in the intermembrane space (IMS) are transferred via the dinuclear copper A center (CU(A)) of subunit 2 and heme A of subunit 1 to the active site in subunit 1, a binuclear center (BNC) formed by heme A3 and copper B (CU(B)). The BNC reduces molecular oxygen to 2 water molecules using 4 electrons from cytochrome c in the IMS and 4 protons from the mitochondrial matrix. This Antilope cervicapra (Blackbuck) protein is Cytochrome c oxidase subunit 3 (MT-CO3).